The following is a 232-amino-acid chain: Ribosomal RNA small subunit methyltransferase G (232 aa).

S-adenosyl-L-methionine is bound by residues Gly-75, Phe-80, 126–127 (AE), and Arg-143.

It belongs to the methyltransferase superfamily. RNA methyltransferase RsmG family.

The protein localises to the cytoplasm. Its function is as follows. Specifically methylates the N7 position of a guanine in 16S rRNA. The sequence is that of Ribosomal RNA small subunit methyltransferase G from Fusobacterium nucleatum subsp. nucleatum (strain ATCC 25586 / DSM 15643 / BCRC 10681 / CIP 101130 / JCM 8532 / KCTC 2640 / LMG 13131 / VPI 4355).